A 93-amino-acid polypeptide reads, in one-letter code: Phosphoribosyl-ATP pyrophosphatase (93 aa).

It belongs to the PRA-PH family.

The protein resides in the cytoplasm. The enzyme catalyses 1-(5-phospho-beta-D-ribosyl)-ATP + H2O = 1-(5-phospho-beta-D-ribosyl)-5'-AMP + diphosphate + H(+). The protein operates within amino-acid biosynthesis; L-histidine biosynthesis; L-histidine from 5-phospho-alpha-D-ribose 1-diphosphate: step 2/9. The polypeptide is Phosphoribosyl-ATP pyrophosphatase (Rhodococcus jostii (strain RHA1)).